The primary structure comprises 269 residues: Subtilisin Savinase (269 aa).

A Ca(2+)-binding site is contributed by Q2. Residues 5 to 268 form the Peptidase S8 domain; that stretch reads PWGISRVQAP…SGLVNAEAAT (264 aa). Catalysis depends on D32, which acts as the Charge relay system. D40 lines the Ca(2+) pocket. H62 serves as the catalytic Charge relay system. 7 residues coordinate Ca(2+): L73, N75, I77, V79, A163, Y165, and A168. The active-site Charge relay system is the S215.

The protein belongs to the peptidase S8 family. Requires Ca(2+) as cofactor.

The protein localises to the secreted. The catalysed reaction is Hydrolysis of proteins with broad specificity for peptide bonds, and a preference for a large uncharged residue in P1. Hydrolyzes peptide amides.. Functionally, subtilisin is an extracellular alkaline serine protease, it catalyzes the hydrolysis of proteins and peptide amides. This Lederbergia lenta (Bacillus lentus) protein is Subtilisin Savinase.